Reading from the N-terminus, the 232-residue chain is Putative membrane protein ORF8 (232 aa).

The segment covering 71–84 (GSSAASIPSAPTPD) has biased composition (low complexity). The segment at 71–121 (GSSAASIPSAPTPDATRESPTGEPHRDRALSTETPTPEPSRDGGSTPEVLH) is disordered. The next 2 membrane-spanning stretches (helical) occupy residues 166–182 (VFAR…GSVA) and 195–211 (LVVT…WVIV).

Its subcellular location is the membrane. The sequence is that of Putative membrane protein ORF8 (ORF8) from Ictalurid herpesvirus 1 (strain Auburn) (IcHV-1).